The sequence spans 102 residues: Transposable element activator uncharacterized 12 kDa protein (102 aa).

The span at 24-51 shows a compositional bias: basic residues; sequence HNHNQNHNHSHNLNPKKKHHRRGQRSAH. Residues 24–55 form a disordered region; it reads HNHNQNHNHSHNLNPKKKHHRRGQRSAHRMYG.

The sequence is that of Transposable element activator uncharacterized 12 kDa protein from Zea mays (Maize).